Reading from the N-terminus, the 70-residue chain is Large ribosomal subunit protein bL31 (70 aa).

Residues cysteine 16, cysteine 18, cysteine 36, and cysteine 39 each coordinate Zn(2+).

The protein belongs to the bacterial ribosomal protein bL31 family. Type A subfamily. As to quaternary structure, part of the 50S ribosomal subunit. Zn(2+) serves as cofactor.

Functionally, binds the 23S rRNA. The chain is Large ribosomal subunit protein bL31 from Fervidobacterium nodosum (strain ATCC 35602 / DSM 5306 / Rt17-B1).